We begin with the raw amino-acid sequence, 58 residues long: Large ribosomal subunit protein eL37 (58 aa).

Residues 1-17 (MTGAGTPSQGKKNTTTH) show a composition bias toward polar residues. The disordered stretch occupies residues 1 to 26 (MTGAGTPSQGKKNTTTHTKCRRCGEK). Zn(2+) is bound by residues Cys-20, Cys-23, Cys-35, and Cys-38. Residues 20 to 38 (CRRCGEKSYHTKKKVCSSC) form a C4-type zinc finger.

Belongs to the eukaryotic ribosomal protein eL37 family. It depends on Zn(2+) as a cofactor.

In terms of biological role, binds to the 23S rRNA. In Halobacterium salinarum (strain ATCC 29341 / DSM 671 / R1), this protein is Large ribosomal subunit protein eL37.